Reading from the N-terminus, the 279-residue chain is Energy-coupling factor transporter ATP-binding protein EcfA1 (279 aa).

In terms of domain architecture, ABC transporter spans Val6–Asp240. Residue Gly40–Ser47 participates in ATP binding.

This sequence belongs to the ABC transporter superfamily. Energy-coupling factor EcfA family. In terms of assembly, forms a stable energy-coupling factor (ECF) transporter complex composed of 2 membrane-embedded substrate-binding proteins (S component), 2 ATP-binding proteins (A component) and 2 transmembrane proteins (T component).

The protein resides in the cell membrane. Its function is as follows. ATP-binding (A) component of a common energy-coupling factor (ECF) ABC-transporter complex. Unlike classic ABC transporters this ECF transporter provides the energy necessary to transport a number of different substrates. The sequence is that of Energy-coupling factor transporter ATP-binding protein EcfA1 from Oceanobacillus iheyensis (strain DSM 14371 / CIP 107618 / JCM 11309 / KCTC 3954 / HTE831).